The sequence spans 394 residues: NAD(P)H-quinone oxidoreductase subunit H (394 aa).

It belongs to the complex I 49 kDa subunit family. As to quaternary structure, NDH-1 can be composed of about 15 different subunits; different subcomplexes with different compositions have been identified which probably have different functions.

It localises to the cellular thylakoid membrane. It carries out the reaction a plastoquinone + NADH + (n+1) H(+)(in) = a plastoquinol + NAD(+) + n H(+)(out). It catalyses the reaction a plastoquinone + NADPH + (n+1) H(+)(in) = a plastoquinol + NADP(+) + n H(+)(out). In terms of biological role, NDH-1 shuttles electrons from an unknown electron donor, via FMN and iron-sulfur (Fe-S) centers, to quinones in the respiratory and/or the photosynthetic chain. The immediate electron acceptor for the enzyme in this species is believed to be plastoquinone. Couples the redox reaction to proton translocation, and thus conserves the redox energy in a proton gradient. Cyanobacterial NDH-1 also plays a role in inorganic carbon-concentration. In Parasynechococcus marenigrum (strain WH8102), this protein is NAD(P)H-quinone oxidoreductase subunit H.